Reading from the N-terminus, the 890-residue chain is Leucine-rich repeat receptor-like tyrosine-protein kinase PXC3 (890 aa).

An N-terminal signal peptide occupies residues 1-23; the sequence is MTFWCMSILLIVGFLSKSELCEA. The Extracellular segment spans residues 24–534; sequence QLSDEATLVA…LRYNHRVSYR (511 aa). Residues Asn46, Asn61, Asn78, and Asn108 are each glycosylated (N-linked (GlcNAc...) asparagine). 18 LRR repeats span residues 67–85, 86–108, 110–132, 133–157, 159–181, 182–205, 206–229, 231–254, 256–276, 278–300, 301–325, 326–349, 350–373, 375–397, 399–421, 422–446, 447–469, and 471–492; these read MLDLSGLQLRGNVTLISDL, RSLKHLDLSGNNFNGRIPTSFGN, SELEFLDLSLNRFVGAIPVEFGK, LRGLRAFNISNNLLVGEIPDELKVL, RLEEFQVSGNGLNGSIPHWVGNL, SSLRVFTAYENDLVGEIPNGLGLV, SELELLNLHSNQLEGKIPKGIFEK, KLKVLVLTQNRLTGELPEAVGICS, LSSIRIGNNELVGVIPRTIGN, SGLTYFEADKNNLSGEIVAEFSK, CSNLTLLNLAANGFAGTIPTELGQL, INLQELILSGNSLFGEIPKSFLGS, GNLNKLDLSNNRLNGTIPKELCSM, RLQYLLLDQNSIRGDIPHEIGNC, KLLQLQLGRNYLTGTIPPEIGRM, RNLQIALNLSFNHLHGSLPPELGKL, DKLVSLDVSNNLLTGSIPPLLKG, and MSLIEVNFSNNLLNGPVPVFVP. 3 N-linked (GlcNAc...) asparagine glycosylation sites follow: Asn140, Asn171, and Asn180. 3 N-linked (GlcNAc...) asparagine glycosylation sites follow: Asn276, Asn289, and Asn303. The N-linked (GlcNAc...) asparagine glycan is linked to Asn363. An N-linked (GlcNAc...) asparagine glycan is attached at Asn429. N-linked (GlcNAc...) asparagine glycosylation is found at Asn477 and Asn498. A helical transmembrane segment spans residues 535–555; the sequence is IVLAVIGSGVAVFVSVTVVVL. Over 556 to 890 the chain is Cytoplasmic; that stretch reads LFMMREKQEK…EMLQEVKQIK (335 aa). The 279-residue stretch at 608-886 folds into the Protein kinase domain; it reads MKESNKLSTG…KKVVEMLQEV (279 aa). Residues 614-622 and Lys636 each bind ATP; that span reads LSTGTFSSV. Residue Asp735 is the Proton acceptor of the active site.

Belongs to the protein kinase superfamily. Tyr protein kinase family. As to expression, expressed in the vascular strands of cotyledons, the shoot apex, hypocotyls, roots, leaves, stems and flowers.

It is found in the cell membrane. It catalyses the reaction L-tyrosyl-[protein] + ATP = O-phospho-L-tyrosyl-[protein] + ADP + H(+). Leucine-rich repeat receptor-like protein kinase that may play a role in vascular tissues development. In Arabidopsis thaliana (Mouse-ear cress), this protein is Leucine-rich repeat receptor-like tyrosine-protein kinase PXC3.